Reading from the N-terminus, the 497-residue chain is Putative aldehyde dehydrogenase AldA (497 aa).

213-219 is a binding site for NAD(+); it reads GKGSESG. Residues Glu257 and Cys291 contribute to the active site.

It belongs to the aldehyde dehydrogenase family.

It carries out the reaction an aldehyde + NAD(+) + H2O = a carboxylate + NADH + 2 H(+). The polypeptide is Putative aldehyde dehydrogenase AldA (aldA) (Staphylococcus haemolyticus (strain JCSC1435)).